A 238-amino-acid polypeptide reads, in one-letter code: Proteasome subunit beta type-6 (238 aa).

Ala2 is modified (N-acetylalanine). Positions Ala2–Gly33 are cleaved as a propeptide — removed in mature form. The active-site Nucleophile is the Thr34. The residue at position 68 (Thr68) is a Phosphothreonine.

It belongs to the peptidase T1B family. In terms of assembly, the 26S proteasome consists of a 20S proteasome core and two 19S regulatory subunits. The 20S proteasome core is a barrel-shaped complex made of 28 subunits that are arranged in four stacked rings. The two outer rings are each formed by seven alpha subunits, and the two inner rings are formed by seven beta subunits. The proteolytic activity is exerted by three beta-subunits PSMB5, PSMB6 and PSMB7.

It is found in the cytoplasm. Its subcellular location is the nucleus. It carries out the reaction Cleavage of peptide bonds with very broad specificity.. In terms of biological role, component of the 20S core proteasome complex involved in the proteolytic degradation of most intracellular proteins. This complex plays numerous essential roles within the cell by associating with different regulatory particles. Associated with two 19S regulatory particles, forms the 26S proteasome and thus participates in the ATP-dependent degradation of ubiquitinated proteins. The 26S proteasome plays a key role in the maintenance of protein homeostasis by removing misfolded or damaged proteins that could impair cellular functions, and by removing proteins whose functions are no longer required. Associated with the PA200 or PA28, the 20S proteasome mediates ubiquitin-independent protein degradation. This type of proteolysis is required in several pathways including spermatogenesis (20S-PA200 complex) or generation of a subset of MHC class I-presented antigenic peptides (20S-PA28 complex). Within the 20S core complex, PSMB6 displays a peptidylglutamyl-hydrolyzing activity also termed postacidic or caspase-like activity, meaning that the peptides bond hydrolysis occurs directly after acidic residues. The sequence is that of Proteasome subunit beta type-6 (Psmb6) from Rattus norvegicus (Rat).